The primary structure comprises 136 residues: DNA-directed RNA polymerase subunit omega (136 aa).

It belongs to the RNA polymerase subunit omega family. As to quaternary structure, the RNAP catalytic core consists of 2 alpha, 1 beta, 1 beta' and 1 omega subunit. When a sigma factor is associated with the core the holoenzyme is formed, which can initiate transcription.

It carries out the reaction RNA(n) + a ribonucleoside 5'-triphosphate = RNA(n+1) + diphosphate. Functionally, promotes RNA polymerase assembly. Latches the N- and C-terminal regions of the beta' subunit thereby facilitating its interaction with the beta and alpha subunits. In Acidiphilium cryptum (strain JF-5), this protein is DNA-directed RNA polymerase subunit omega.